A 390-amino-acid polypeptide reads, in one-letter code: L-seryl-tRNA(Sec) selenium transferase (390 aa).

Residue K225 is modified to N6-(pyridoxal phosphate)lysine.

The protein belongs to the SelA family. Pyridoxal 5'-phosphate is required as a cofactor.

The protein resides in the cytoplasm. The enzyme catalyses L-seryl-tRNA(Sec) + selenophosphate + H(+) = L-selenocysteinyl-tRNA(Sec) + phosphate. It participates in aminoacyl-tRNA biosynthesis; selenocysteinyl-tRNA(Sec) biosynthesis; selenocysteinyl-tRNA(Sec) from L-seryl-tRNA(Sec) (bacterial route): step 1/1. Functionally, converts seryl-tRNA(Sec) to selenocysteinyl-tRNA(Sec) required for selenoprotein biosynthesis. The chain is L-seryl-tRNA(Sec) selenium transferase from Helicobacter pylori (strain P12).